Here is a 77-residue protein sequence, read N- to C-terminus: Small ribosomal subunit protein bS16 (77 aa).

It belongs to the bacterial ribosomal protein bS16 family.

The chain is Small ribosomal subunit protein bS16 from Helicobacter hepaticus (strain ATCC 51449 / 3B1).